Here is a 458-residue protein sequence, read N- to C-terminus: MSGRIVQIIGAVIDVEFPRDAVPKVYDALKVSDTETILEVQQQLGDGVVRAIAMGTTEGLKRGLDVVNSGSAISVPVGKATLGRIMNVLGEPIDEAGEIGEDERMPIHRKAPSYAEQAASNELLETGIKVIDLVCPFAKGGKVGLFGGAGVGKTVNMMELIRNIATEHSGYSVFAGVGERTREGNDFYHEMQESNVLDKVSLVYGQMNEPPGNRLRVALTGLTIAEKFRDDGRDVLLFVDNIYRYTLAGTEVSALLGRMPSAVGYQPTLAEEMGVLQERITSTKTGSITSVQAVYVPADDLTDPSPATTFSHLDATVVLARSIAELGIYPAIDPLDSTSRQLDPLTVGEEHYNTARGVQGVLQRYKELKDIIAILGMDELSDEDKLTVSRARKIQRFLSQPFFVAEVFTGAPGKYVSLKETIRGFQGILDGEYDDLPEQAFYMVGTIDEAVEKANNMK.

147 to 154 (GGAGVGKT) provides a ligand contact to ATP.

The protein belongs to the ATPase alpha/beta chains family. F-type ATPases have 2 components, CF(1) - the catalytic core - and CF(0) - the membrane proton channel. CF(1) has five subunits: alpha(3), beta(3), gamma(1), delta(1), epsilon(1). CF(0) has three main subunits: a(1), b(2) and c(9-12). The alpha and beta chains form an alternating ring which encloses part of the gamma chain. CF(1) is attached to CF(0) by a central stalk formed by the gamma and epsilon chains, while a peripheral stalk is formed by the delta and b chains.

The protein resides in the cell inner membrane. The catalysed reaction is ATP + H2O + 4 H(+)(in) = ADP + phosphate + 5 H(+)(out). Its function is as follows. Produces ATP from ADP in the presence of a proton gradient across the membrane. The catalytic sites are hosted primarily by the beta subunits. This is ATP synthase subunit beta from Chromohalobacter salexigens (strain ATCC BAA-138 / DSM 3043 / CIP 106854 / NCIMB 13768 / 1H11).